Reading from the N-terminus, the 61-residue chain is Small ribosomal subunit protein uS14 (61 aa).

Residues Cys-24, Cys-27, Cys-40, and Cys-43 each contribute to the Zn(2+) site.

It belongs to the universal ribosomal protein uS14 family. Zinc-binding uS14 subfamily. Part of the 30S ribosomal subunit. Contacts proteins S3 and S10. Zn(2+) is required as a cofactor.

Binds 16S rRNA, required for the assembly of 30S particles and may also be responsible for determining the conformation of the 16S rRNA at the A site. The chain is Small ribosomal subunit protein uS14 from Thermoanaerobacter sp. (strain X514).